We begin with the raw amino-acid sequence, 102 residues long: Glutaredoxin-C13 (102 aa).

Positions 1 to 101 (MDKVMRMSSE…PLIKPYQSIL (101 aa)) constitute a Glutaredoxin domain. A disulfide bridge links cysteine 21 with cysteine 24.

This sequence belongs to the glutaredoxin family. CC-type subfamily.

The protein localises to the cytoplasm. Has a glutathione-disulfide oxidoreductase activity in the presence of NADPH and glutathione reductase. Reduces low molecular weight disulfides and proteins. This Arabidopsis thaliana (Mouse-ear cress) protein is Glutaredoxin-C13 (GRXC13).